The primary structure comprises 465 residues: Mothers against decapentaplegic homolog 5 (465 aa).

N-acetylthreonine is present on Thr2. An MH1 domain is found at 13–137 (PAVKRLLGWK…YKRVESPVLP (125 aa)). Zn(2+) is bound by residues Cys65, Cys110, Cys122, and His127. Residues 163-249 (NEPHMPQNAT…PMDTSNNMIP (87 aa)) are disordered. Residues 169-182 (QNATFPDSFHQPNN) are compositionally biased toward polar residues. Positions 186 to 197 (PLSPNSPYPPSP) are enriched in pro residues. Low complexity predominate over residues 198–214 (ASSTYPNSPASSGPGSP). Positions 234-249 (GQDNSQPMDTSNNMIP) are enriched in polar residues. One can recognise an MH2 domain in the interval 271 to 465 (WCSIVYYELN…SPLNPISSVS (195 aa)). Residues Ser463 and Ser465 each carry the phosphoserine modification.

Belongs to the dwarfin/SMAD family. Homodimer. Forms trimers with the co-SMAD SMAD4. Interacts with PEBP2-alpha subunit and SMURF1. Interacts with SUV39H1 and SUV39H2. Interacts (via MH2 domain) with LEMD3. Interacts with WWP1. Interacts with TMEM119. Interacts with ZNF8. Interacts with RANBP3L. Interacts with HK1. Interacts with HGS; this interaction attenuates BMP signaling. Post-translationally, phosphorylated on serine by BMP (bone morphogenetic proteins) type 1 receptor kinase. Ubiquitin-mediated proteolysis by SMAD-specific E3 ubiquitin ligase SMURF1. Ubiquitous.

The protein resides in the cytoplasm. Its subcellular location is the nucleus. It is found in the mitochondrion. Transcriptional regulator that plays a role in various cellular processes including embryonic development, cell differentiation, angiogenesis and tissue homeostasis. Upon BMP ligand binding to their receptors at the cell surface, is phosphorylated by activated type I BMP receptors (BMPRIs) and associates with SMAD4 to form a heteromeric complex which translocates into the nucleus acting as transcription factor. In turn, the hetero-trimeric complex recognizes cis-regulatory elements containing Smad Binding Elements (SBEs) to modulate the outcome of the signaling network. Non-phosphorylated SMAD5 has a cytoplasmic role in energy metabolism regulation by promoting mitochondrial respiration and glycolysis in response to cytoplasmic pH changes. Mechanistically, interacts with hexokinase 1/HK1 and thereby accelerates glycolysis. The polypeptide is Mothers against decapentaplegic homolog 5 (SMAD5) (Homo sapiens (Human)).